A 439-amino-acid chain; its full sequence is Niacin transporter NiaP (439 aa).

12 consecutive transmembrane segments (helical) span residues 20 to 40 (LWVVGLGWMFDALDTGIIAFI), 57 to 77 (WIVSIGFIGMALGAVFSGGLA), 84 to 104 (TVFATTLLIYSLATAACAFAP), 108 to 128 (WLLAFRFIVGLGLGGQLPVAV), 143 to 163 (FIVLLESFWGLGWLVAALVSY), 169 to 189 (FGWHIAFLIGGLPAIYVYVII), 253 to 273 (LMLWLVWFGIVFSYYGIFTWL), 288 to 308 (FEYVLIMILAQLPGYISAAWL), 316 to 336 (ATLAGFIGACAISAYFFGQAD), 338 to 358 (VFNIMVWGCLLSFFNLGAWGV), 374 to 394 (FGAGWASAVGRMGGIAAPIVV), and 407 to 427 (VFMMFTLVLLAVAAVIVILGE).

The protein belongs to the major facilitator superfamily. Sugar transporter (TC 2.A.1.1) family.

The protein resides in the cell inner membrane. In terms of biological role, functions as a high-affinity transporter of niacin (nicotinamide or nicotinate). Probably substantially contributes to niacin transport when its concentration in the medium is very low. The polypeptide is Niacin transporter NiaP (Acinetobacter baylyi (strain ATCC 33305 / BD413 / ADP1)).